A 387-amino-acid polypeptide reads, in one-letter code: Phosphoglycerate kinase (387 aa).

Residues 21–23, Arg-36, 59–62, Arg-113, and Arg-146 contribute to the substrate site; these read DLN and HLGR. Residues Lys-197, Glu-314, and 340–343 contribute to the ATP site; that span reads GGDT.

The protein belongs to the phosphoglycerate kinase family. In terms of assembly, monomer.

The protein resides in the cytoplasm. It catalyses the reaction (2R)-3-phosphoglycerate + ATP = (2R)-3-phospho-glyceroyl phosphate + ADP. Its pathway is carbohydrate degradation; glycolysis; pyruvate from D-glyceraldehyde 3-phosphate: step 2/5. The sequence is that of Phosphoglycerate kinase from Pectobacterium carotovorum subsp. carotovorum (strain PC1).